The chain runs to 329 residues: Malate dehydrogenase (329 aa).

12 to 18 (GAAGQIG) is an NAD(+) binding site. Positions 93 and 99 each coordinate substrate. Residues N106, Q113, and 130–132 (TGN) contribute to the NAD(+) site. Substrate-binding residues include N132 and R163. Residue H188 is the Proton acceptor of the active site.

This sequence belongs to the LDH/MDH superfamily. MDH type 2 family.

It carries out the reaction (S)-malate + NAD(+) = oxaloacetate + NADH + H(+). Functionally, catalyzes the reversible oxidation of malate to oxaloacetate. The sequence is that of Malate dehydrogenase from Mycobacterium leprae (strain TN).